A 331-amino-acid polypeptide reads, in one-letter code: Inositol 2-dehydrogenase (331 aa).

This sequence belongs to the Gfo/Idh/MocA family. Homotetramer.

The enzyme catalyses myo-inositol + NAD(+) = scyllo-inosose + NADH + H(+). Involved in the oxidation of myo-inositol (MI) to 2-keto-myo-inositol (2KMI or 2-inosose). In Renibacterium salmoninarum (strain ATCC 33209 / DSM 20767 / JCM 11484 / NBRC 15589 / NCIMB 2235), this protein is Inositol 2-dehydrogenase.